The chain runs to 562 residues: Protein FAM83D-A (562 aa).

The disordered stretch occupies residues 424 to 471 (ITTQTTETSQCTTQTPAPTSSVARLSNSSNSSSSSFSSTSITSTGSNC). A compositionally biased stretch (low complexity) spans 425 to 471 (TTQTTETSQCTTQTPAPTSSVARLSNSSNSSSSSFSSTSITSTGSNC).

This sequence belongs to the FAM83 family.

It localises to the cytoplasm. It is found in the cytoskeleton. Its subcellular location is the spindle. The protein localises to the spindle pole. In terms of biological role, may regulate cell proliferation, growth, migration and epithelial to mesenchymal transition. May also be important for proper chromosome congression and alignment during mitosis. This Xenopus laevis (African clawed frog) protein is Protein FAM83D-A.